A 65-amino-acid chain; its full sequence is Trypsin inhibitor (65 aa).

In terms of assembly, homotrimer.

This Zea mays (Maize) protein is Trypsin inhibitor.